The chain runs to 250 residues: tRNA (guanine-N(1)-)-methyltransferase (250 aa).

S-adenosyl-L-methionine contacts are provided by residues G116 and 136–141 (IGDYVL).

This sequence belongs to the RNA methyltransferase TrmD family. Homodimer.

Its subcellular location is the cytoplasm. The catalysed reaction is guanosine(37) in tRNA + S-adenosyl-L-methionine = N(1)-methylguanosine(37) in tRNA + S-adenosyl-L-homocysteine + H(+). Functionally, specifically methylates guanosine-37 in various tRNAs. In Pseudomonas putida (strain ATCC 47054 / DSM 6125 / CFBP 8728 / NCIMB 11950 / KT2440), this protein is tRNA (guanine-N(1)-)-methyltransferase.